The chain runs to 361 residues: Adenosine kinase (361 aa).

The Nuclear localization signal motif lies at 7 to 15; the sequence is PKPKKLKVE. D34 contacts adenosine. Position 48 (S48) interacts with Mg(2+). Residue Y76 is modified to Phosphotyrosine. D146 and N147 together coordinate Mg(2+). An adenosine-binding site is contributed by Q305. Residue D316 is part of the active site. The active-site Proton acceptor is the D316.

This sequence belongs to the carbohydrate kinase PfkB family. As to quaternary structure, monomer. Mg(2+) is required as a cofactor. In terms of processing, the N-terminus is blocked.

Its subcellular location is the nucleus. The enzyme catalyses adenosine + ATP = AMP + ADP + H(+). Its pathway is purine metabolism; AMP biosynthesis via salvage pathway; AMP from adenosine: step 1/1. With respect to regulation, activity is inhibited by 5-iodotubercidin and 5'-amino-5'-deoxyadenosine. In terms of biological role, catalyzes the phosphorylation of the purine nucleoside adenosine at the 5' position in an ATP-dependent manner. Serves as a potential regulator of concentrations of extracellular adenosine and intracellular adenine nucleotides. This is Adenosine kinase (ADK) from Cricetulus griseus (Chinese hamster).